The sequence spans 188 residues: Peptide deformylase (188 aa).

2 residues coordinate Fe cation: C107 and H149. E150 is an active-site residue. H153 lines the Fe cation pocket.

This sequence belongs to the polypeptide deformylase family. Requires Fe(2+) as cofactor.

It catalyses the reaction N-terminal N-formyl-L-methionyl-[peptide] + H2O = N-terminal L-methionyl-[peptide] + formate. In terms of biological role, removes the formyl group from the N-terminal Met of newly synthesized proteins. Requires at least a dipeptide for an efficient rate of reaction. N-terminal L-methionine is a prerequisite for activity but the enzyme has broad specificity at other positions. The chain is Peptide deformylase from Thermosynechococcus vestitus (strain NIES-2133 / IAM M-273 / BP-1).